Consider the following 289-residue polypeptide: Syntaxin-3 (289 aa).

Residues methionine 1–lysine 263 lie on the Cytoplasmic side of the membrane. Residues methionine 32 to alanine 111 are a coiled coil. One can recognise a t-SNARE coiled-coil homology domain in the interval leucine 191 to alanine 253. Residues leucine 264 to leucine 284 form a helical; Anchor for type IV membrane protein membrane-spanning segment. At serine 285–asparagine 289 the chain is on the extracellular side.

The protein belongs to the syntaxin family. In terms of assembly, interacts with REEP6. Interacts with PRPH2 in rod and cone photoreceptors. Interacts with ROM1. Interacts with SNAP25. Interacts with VAMP2. Interacts with IPO5. Expressed in small intestine, kidney, pancreas, placenta as well as in retina. Weaker expression in lung, liver and heart. Not expressed in brain and skeletal muscle. As to expression, expressed only in the retina. In terms of tissue distribution, ubiquitously expressed.

It localises to the apical cell membrane. Its subcellular location is the nucleus. Functionally, potentially involved in docking of synaptic vesicles at presynaptic active zones. Apical receptor involved in membrane fusion of apical vesicles. Essential for survival of retinal photoreceetors. Its function is as follows. Functions as a regulator of gene expression. The chain is Syntaxin-3 (STX3) from Homo sapiens (Human).